A 280-amino-acid chain; its full sequence is Hydrolase MT0498 (280 aa).

The region spanning 1–251 (MRIALAQIRS…PQLLVADIDV (251 aa)) is the CN hydrolase domain. Glu-40 (proton acceptor) is an active-site residue. Catalysis depends on Lys-110, which acts as the Proton donor. Cys-146 acts as the Nucleophile in catalysis.

It belongs to the carbon-nitrogen hydrolase superfamily. NIT1/NIT2 family.

The chain is Hydrolase MT0498 from Mycobacterium tuberculosis (strain CDC 1551 / Oshkosh).